The primary structure comprises 37 residues: Large ribosomal subunit protein bL36 (37 aa).

The protein belongs to the bacterial ribosomal protein bL36 family.

The polypeptide is Large ribosomal subunit protein bL36 (Colwellia psychrerythraea (strain 34H / ATCC BAA-681) (Vibrio psychroerythus)).